The primary structure comprises 298 residues: ATP phosphoribosyltransferase (298 aa).

This sequence belongs to the ATP phosphoribosyltransferase family. Long subfamily. Requires Mg(2+) as cofactor.

It localises to the cytoplasm. The enzyme catalyses 1-(5-phospho-beta-D-ribosyl)-ATP + diphosphate = 5-phospho-alpha-D-ribose 1-diphosphate + ATP. The protein operates within amino-acid biosynthesis; L-histidine biosynthesis; L-histidine from 5-phospho-alpha-D-ribose 1-diphosphate: step 1/9. Its activity is regulated as follows. Feedback inhibited by histidine. Functionally, catalyzes the condensation of ATP and 5-phosphoribose 1-diphosphate to form N'-(5'-phosphoribosyl)-ATP (PR-ATP). Has a crucial role in the pathway because the rate of histidine biosynthesis seems to be controlled primarily by regulation of HisG enzymatic activity. In Photobacterium profundum (strain SS9), this protein is ATP phosphoribosyltransferase (hisG).